Here is a 177-residue protein sequence, read N- to C-terminus: ATP synthase subunit delta (177 aa).

The protein belongs to the ATPase delta chain family. F-type ATPases have 2 components, F(1) - the catalytic core - and F(0) - the membrane proton channel. F(1) has five subunits: alpha(3), beta(3), gamma(1), delta(1), epsilon(1). F(0) has three main subunits: a(1), b(2) and c(10-14). The alpha and beta chains form an alternating ring which encloses part of the gamma chain. F(1) is attached to F(0) by a central stalk formed by the gamma and epsilon chains, while a peripheral stalk is formed by the delta and b chains.

The protein localises to the cell inner membrane. F(1)F(0) ATP synthase produces ATP from ADP in the presence of a proton or sodium gradient. F-type ATPases consist of two structural domains, F(1) containing the extramembraneous catalytic core and F(0) containing the membrane proton channel, linked together by a central stalk and a peripheral stalk. During catalysis, ATP synthesis in the catalytic domain of F(1) is coupled via a rotary mechanism of the central stalk subunits to proton translocation. Functionally, this protein is part of the stalk that links CF(0) to CF(1). It either transmits conformational changes from CF(0) to CF(1) or is implicated in proton conduction. The protein is ATP synthase subunit delta of Salmonella agona (strain SL483).